We begin with the raw amino-acid sequence, 295 residues long: Cytidine deaminase (295 aa).

2 consecutive CMP/dCMP-type deaminase domains span residues 48–168 and 187–295; these read EDAD…FGPA and DDDE…YLSL. 89-91 provides a ligand contact to substrate; it reads NME. His-102 provides a ligand contact to Zn(2+). Residue Glu-104 is the Proton donor of the active site. 2 residues coordinate Zn(2+): Cys-129 and Cys-132.

This sequence belongs to the cytidine and deoxycytidylate deaminase family. In terms of assembly, homodimer. The cofactor is Zn(2+).

The enzyme catalyses cytidine + H2O + H(+) = uridine + NH4(+). The catalysed reaction is 2'-deoxycytidine + H2O + H(+) = 2'-deoxyuridine + NH4(+). Its function is as follows. This enzyme scavenges exogenous and endogenous cytidine and 2'-deoxycytidine for UMP synthesis. This chain is Cytidine deaminase, found in Vibrio cholerae serotype O1 (strain ATCC 39315 / El Tor Inaba N16961).